The chain runs to 446 residues: Glutamine synthetase (446 aa).

Residues 14–107 form the GS beta-grasp domain; sequence NNVKFLRFQF…IICDVYRKNG (94 aa). One can recognise a GS catalytic domain in the interval 114–446; it reads PRGCLKRVLA…DWEFNKYVRI (333 aa). 2 residues coordinate Mg(2+): Glu138 and Glu140. Glu187 contributes to the ATP binding site. Positions 192 and 199 each coordinate Mg(2+). L-glutamate-binding positions include 243–244 and Gly244; that span reads NG. His248 is a Mg(2+) binding site. ATP is bound at residue Ser252. Residues Arg301, Glu307, and Arg319 each contribute to the L-glutamate site. Residues Arg319, Arg324, and Lys331 each contribute to the ATP site. Residue Glu336 coordinates Mg(2+). Arg338 contributes to the L-glutamate binding site.

Belongs to the glutamine synthetase family. As to quaternary structure, oligomer of 12 subunits arranged in the form of two hexagons. Mg(2+) is required as a cofactor.

The protein resides in the cytoplasm. It carries out the reaction L-glutamate + NH4(+) + ATP = L-glutamine + ADP + phosphate + H(+). In terms of biological role, probably involved in nitrogen metabolism via ammonium assimilation. Catalyzes the ATP-dependent biosynthesis of glutamine from glutamate and ammonia. The chain is Glutamine synthetase from Methanococcus voltae.